The following is a 462-amino-acid chain: MNKRRIIEVLRHGQADDQVMVQGWLRTKRTLKDFSFVEVNDGSSLANLQVVLDGSLADYDRLLSQLQTGAALVVEGKLAPSPGKGQRVELKATKLELLGGADPGSYPLQKKRHSFEFLRTIGHLRPRTNTIGAVMRVRNACATAIHQFFQERGFLWVHTPIITASDCEGAGDLFKVTTLDLQRVPKNGEGIDYSQDFFGKQAYLTVSGQLEAEVMALAFQNVYTFGPTFRAENSNTSRHLAEFWMVEPEMAFCDLEGDRQWAEEFLKYIFKFVLEKCPEDMEFFDQRIDNTVLATADNIINNEFAWLTYSEAIKLLEKADQKFEYPVAWGVDLQSEHERYLAETVFKRPTIVTDYPKDIKAFYMRLNDDGKTVAAMDILAPKIGEIIGGSQREERLDILTQRMQEQGVPEEDLWWYLDLRRYGSVPHAGFGLGFERIVQFMTGMANIRDVIPFPRTPMNAEF.

The protein belongs to the class-II aminoacyl-tRNA synthetase family. In terms of assembly, homodimer.

Its subcellular location is the cytoplasm. The catalysed reaction is tRNA(Asn) + L-asparagine + ATP = L-asparaginyl-tRNA(Asn) + AMP + diphosphate + H(+). The protein is Asparagine--tRNA ligase of Synechocystis sp. (strain ATCC 27184 / PCC 6803 / Kazusa).